Consider the following 487-residue polypeptide: Zinc finger and BTB domain-containing protein 32 (487 aa).

The region spanning 29 to 87 (CDTLITVGGQEFPAHSLVLAGVSQQLGRRGQWALGEGISPSTFAQLLNFVYGESVELQP) is the BTB domain. Residues 113-166 (RGDRAKKPDPGLKKHQEEPEKPSRNAERELGDPGEKQKPEQVSRTGGREQEMLH) show a composition bias toward basic and acidic residues. Disordered regions lie at residues 113 to 208 (RGDR…ADGK) and 308 to 371 (QNQL…ARSR). A compositionally biased stretch (polar residues) spans 308-320 (QNQLASSSPTPGS). The segment covering 357–369 (PPRPHPPPAPPAR) has biased composition (pro residues). 3 consecutive C2H2-type zinc fingers follow at residues 373-395 (YACSVCGKRFSLKHQMETHYRVH), 401-423 (FSCSLCPQRSRDFSAMTKHLRTH), and 428-450 (YRXXLCGAGCPSLASMQAHMRGH). Positions 468 to 487 (SSSRPSRPSTSPCCPSSSTT) are disordered.

It belongs to the krueppel C2H2-type zinc-finger protein family. Homodimer (via PTB domain). Interacts with the N-terminal of FANCC. Interacts with ZBTB16. Interacts with GATA3.

It is found in the nucleus. In terms of biological role, DNA-binding protein that binds to the to a 5'-TGTACAGTGT-3' core sequence. May function as a transcriptional transactivator and transcriptional repressor. Probably exerts its repressor effect by preventing GATA3 from binding to DNA. May play a role in regulating the differentiation and activation of helper T-cells. In Pan troglodytes (Chimpanzee), this protein is Zinc finger and BTB domain-containing protein 32 (ZBTB32).